A 427-amino-acid polypeptide reads, in one-letter code: tRNA pseudouridine synthase Pus10 (427 aa).

Asp-240 (nucleophile) is an active-site residue. Substrate contacts are provided by Tyr-306 and Tyr-378.

This sequence belongs to the pseudouridine synthase Pus10 family.

The enzyme catalyses uridine(54) in tRNA = pseudouridine(54) in tRNA. The catalysed reaction is uridine(55) in tRNA = pseudouridine(55) in tRNA. Its function is as follows. Responsible for synthesis of pseudouridine from uracil-54 and uracil-55 in the psi GC loop of transfer RNAs. This chain is tRNA pseudouridine synthase Pus10, found in Halorubrum lacusprofundi (strain ATCC 49239 / DSM 5036 / JCM 8891 / ACAM 34).